Reading from the N-terminus, the 902-residue chain is Glutamate receptor 4 (902 aa).

The N-terminal stretch at 1 to 20 (MRIICRQIVLLFSGFWGLAM) is a signal peptide. The Extracellular portion of the chain corresponds to 22–544 (AFPSSVQIGG…GVFSFLDPLA (523 aa)). N-linked (GlcNAc...) asparagine glycosylation is found at N52, N56, N258, N371, N407, and N414. An intrachain disulfide couples C84 to C331. L-glutamate contacts are provided by P500, T502, and R507. Residues 545–565 (YEIWMCIVFAYIGVSVVLFLV) traverse the membrane as a helical segment. Residues 566-592 (SRFSPYEWHTEEPEDGKEGPSDQPPNE) are Cytoplasmic-facing. Residues 593–608 (FGIFNSLWFSLGAFMQ) constitute an intramembrane region (helical; Pore-forming). The stretch at 609–611 (QGC) is an intramembrane region. C611 is lipidated: S-palmitoyl cysteine. Residues 612–617 (DISPRS) are Cytoplasmic-facing. Residues 618–638 (LSGRIVGGVWWFFTLIIISSY) form a helical membrane-spanning segment. Over 639-813 (TANLAAFLTV…DKTSALSLSN (175 aa)) the chain is Extracellular. S676, T677, and E727 together coordinate L-glutamate. A disulfide bridge connects residues C740 and C795. Residues 814–834 (VAGVFYILVGGLGLAMLVALI) traverse the membrane as a helical segment. Topologically, residues 835–902 (EFCYKSRAEA…GLAVIASDLP (68 aa)) are cytoplasmic. The S-palmitoyl cysteine moiety is linked to residue C837. S862 is subject to Phosphoserine; by PKC/PRKCG.

It belongs to the glutamate-gated ion channel (TC 1.A.10.1) family. GRIA4 subfamily. In terms of assembly, homotetramer or heterotetramer of pore-forming glutamate receptor subunits. Tetramers may be formed by the dimerization of dimers. Interacts with EPB41L1 via its C-terminus. Isoform 3 interacts with PICK1. Found in a complex with GRIA1, GRIA2, GRIA3, CNIH2, CNIH3, CACNG2, CACNG3, CACNG4, CACNG5, CACNG7 and CACNG8. Interacts with CACNG5 and PRKCG. Found in a complex with GRIA1, GRIA2, GRIA3, DLG4, CACNG8 and CNIH2. Palmitoylated. Depalmitoylated upon L-glutamate stimulation. ZDHHC3/GODZ specifically palmitoylates Cys-611, which leads to Golgi retention and decreased cell surface expression. In contrast, Cys-837 palmitoylation does not affect cell surface expression but regulates stimulation-dependent endocytosis. Post-translationally, phosphorylated at Ser-862 by PRKCG; phosphorylation increases plasma membrane-associated GRI4 expression. In terms of tissue distribution, detected in cerebellum.

The protein localises to the cell membrane. It localises to the postsynaptic cell membrane. The protein resides in the cell projection. It is found in the dendrite. The catalysed reaction is Ca(2+)(in) = Ca(2+)(out). The enzyme catalyses Na(+)(in) = Na(+)(out). It catalyses the reaction Mg(2+)(in) = Mg(2+)(out). In terms of biological role, ionotropic glutamate receptor that functions as a ligand-gated cation channel, gated by L-glutamate and glutamatergic agonists such as alpha-amino-3-hydroxy-5-methyl-4-isoxazolepropionic acid (AMPA), quisqualic acid, and kainic acid. L-glutamate acts as an excitatory neurotransmitter at many synapses in the central nervous system and plays an important role in fast excitatory synaptic transmission. Binding of the excitatory neurotransmitter L-glutamate induces a conformation change, leading to the opening of the cation channel, and thereby converts the chemical signal to an electrical impulse upon entry of monovalent and divalent cations such as sodium and calcium. The receptor then desensitizes rapidly and enters a transient inactive state, characterized by the presence of bound agonist. In the presence of CACNG8, shows resensitization which is characterized by a delayed accumulation of current flux upon continued application of L-glutamate. The polypeptide is Glutamate receptor 4 (Rattus norvegicus (Rat)).